The primary structure comprises 353 residues: tRNA-specific 2-thiouridylase MnmA 2 (353 aa).

Residues 9-16 (AMSGGVDS) and Met-35 contribute to the ATP site. Cys-98 (nucleophile) is an active-site residue. A disulfide bond links Cys-98 and Cys-194. Position 122 (Gly-122) interacts with ATP. Positions 144 to 146 (KDQ) are interaction with tRNA. Cys-194 functions as the Cysteine persulfide intermediate in the catalytic mechanism. An interaction with tRNA region spans residues 300–301 (RY).

Belongs to the MnmA/TRMU family.

The protein resides in the cytoplasm. It catalyses the reaction S-sulfanyl-L-cysteinyl-[protein] + uridine(34) in tRNA + AH2 + ATP = 2-thiouridine(34) in tRNA + L-cysteinyl-[protein] + A + AMP + diphosphate + H(+). Catalyzes the 2-thiolation of uridine at the wobble position (U34) of tRNA, leading to the formation of s(2)U34. This is tRNA-specific 2-thiouridylase MnmA 2 from Clostridium botulinum (strain Loch Maree / Type A3).